A 141-amino-acid chain; its full sequence is Hemoglobin subunit alpha (141 aa).

In terms of domain architecture, Globin spans 1-141 (VLSAADKANV…VSTVLTSKYR (141 aa)). Ser3 is subject to Phosphoserine. N6-succinyllysine occurs at positions 7 and 11. An N6-acetyllysine; alternate modification is found at Lys16. Lys16 is subject to N6-succinyllysine; alternate. Lys40 carries the post-translational modification N6-succinyllysine. The residue at position 49 (Ser49) is a Phosphoserine. Residue His58 participates in O2 binding. His87 lines the heme b pocket. Ser102 bears the Phosphoserine mark. Thr108 is modified (phosphothreonine). Ser124 is subject to Phosphoserine. A phosphothreonine mark is found at Thr134 and Thr137. Ser138 is modified (phosphoserine).

It belongs to the globin family. As to quaternary structure, heterotetramer of two alpha chains and two beta chains. In terms of tissue distribution, red blood cells.

Functionally, involved in oxygen transport from the lung to the various peripheral tissues. In terms of biological role, hemopressin acts as an antagonist peptide of the cannabinoid receptor CNR1. Hemopressin-binding efficiently blocks cannabinoid receptor CNR1 and subsequent signaling. The chain is Hemoglobin subunit alpha (HBA) from Sus scrofa (Pig).